We begin with the raw amino-acid sequence, 309 residues long: Verprolin (309 aa).

The span at 1–13 (MAPAPPPPPPAPA) shows a compositional bias: pro residues. The interval 1–273 (MAPAPPPPPP…PNRVDDHGRF (273 aa)) is disordered. Residues 27–44 (DRSALLNSIQKGKKLKKA) enclose the WH2 domain. The segment covering 82-91 (LPTSSNNTQQ) has biased composition (polar residues). Pro residues predominate over residues 141-207 (TSAPPRPSIP…PPKVPPPPLS (67 aa)).

This sequence belongs to the verprolin family. Interacts with wsp1. Interacts with myo1 (via SH3 domain). Interacts with actin monomers.

Its subcellular location is the cytoplasm. The protein localises to the cytoskeleton. In terms of biological role, involved in cytoskeletal organization and cellular growth. May exert its effects on the cytoskeleton directly, or indirectly via proline-binding proteins such as profilin or proteins possessing SH3 domains. Plays a role in actin patch assembly by enhancing the ability of myo1 to stimulate actin polymerization by the Arp2/3 complex. The chain is Verprolin from Schizosaccharomyces pombe (strain 972 / ATCC 24843) (Fission yeast).